Reading from the N-terminus, the 201-residue chain is Protocatechuate 3,4-dioxygenase alpha chain (201 aa).

Residue R134 participates in 3,4-dihydroxybenzoate binding.

Belongs to the intradiol ring-cleavage dioxygenase family. As to quaternary structure, the enzyme is an oligomer of 12 copies of the alpha and beta chains. Fe(3+) serves as cofactor.

The catalysed reaction is 3,4-dihydroxybenzoate + O2 = 3-carboxy-cis,cis-muconate + 2 H(+). The protein operates within aromatic compound metabolism; beta-ketoadipate pathway; 3-carboxy-cis,cis-muconate from 3,4-dihydroxybenzoate: step 1/1. Its function is as follows. Plays an essential role in the utilization of numerous aromatic and hydroaromatic compounds via the beta-ketoadipate pathway. The polypeptide is Protocatechuate 3,4-dioxygenase alpha chain (pcaG) (Pseudomonas putida (Arthrobacter siderocapsulatus)).